Reading from the N-terminus, the 358-residue chain is Peptide chain release factor 1 (358 aa).

Glutamine 234 carries the post-translational modification N5-methylglutamine. The segment at 283–306 (ERLHSERAGQRKSMVGSGDRSERI) is disordered.

This sequence belongs to the prokaryotic/mitochondrial release factor family. Methylated by PrmC. Methylation increases the termination efficiency of RF1.

The protein localises to the cytoplasm. Its function is as follows. Peptide chain release factor 1 directs the termination of translation in response to the peptide chain termination codons UAG and UAA. This chain is Peptide chain release factor 1, found in Zymomonas mobilis subsp. mobilis (strain ATCC 31821 / ZM4 / CP4).